Here is a 424-residue protein sequence, read N- to C-terminus: Putative chloroquine resistance transporter (424 aa).

Topologically, residues 1-56 are cytoplasmic; it reads MTGMKKGKNKKKNVKNDERYKELDSLISNDSEIGNNSRWGGAKRICKLIGNEMRNN. Residues 57 to 77 traverse the membrane as a helical segment; the sequence is IYVYLLSILYLCVSVMNKVFS. Topologically, residues 78 to 88 are vacuolar; the sequence is KRTLNKIGNYS. An N-linked (GlcNAc...) asparagine glycan is attached at Asn86. The helical transmembrane segment at 89–109 threads the bilayer; it reads FVTSEVHNMICTIVFQLLYFI. The Cytoplasmic portion of the chain corresponds to 110-125; that stretch reads YRKTSNPASRNESQKN. The helical transmembrane segment at 126-146 threads the bilayer; the sequence is FGWQFFLISLLDASTVIITMI. The Vacuolar segment spans residues 147-156; that stretch reads GLTRTTGNIQ. Residues 157 to 177 form a helical membrane-spanning segment; it reads SFIMQLIIPVNMYFCFIFLGY. Over 178-180 the chain is Cytoplasmic; sequence RYH. The chain crosses the membrane as a helical span at residues 181-201; that stretch reads LFNYLGAFIILITIAAVETVL. Over 202–209 the chain is Vacuolar; that stretch reads SYETQSDN. A helical transmembrane segment spans residues 210–230; it reads SIIFNLIMIFALIPLSFSNMT. At 231–248 the chain is on the cytoplasmic side; it reads REVVFKKHKINIIRLNAM. The helical transmembrane segment at 249–269 threads the bilayer; sequence VALFQFFTSLLVLPVYNISFL. Residues 270–317 lie on the Vacuolar side of the membrane; it reads KEIYMPFSEMGTNINDGLRCLFYGQSTIVENCGVGMVKMCDQCEGAWK. 2 disulfides stabilise this stretch: Cys289-Cys312 and Cys301-Cys309. A helical transmembrane segment spans residues 318 to 338; that stretch reads TFITYSFFNICDNLLVCYIID. Residues 339–346 lie on the Cytoplasmic side of the membrane; sequence KFSTMTYT. Residues 347–367 form a helical membrane-spanning segment; that stretch reads IVSCIQGPAITIAYYFKFLAG. Topologically, residues 368–377 are vacuolar; that stretch reads DVVRQPRLLD. A helical membrane pass occupies residues 378–398; that stretch reads FLTLFGYLLGTIIYRIGNIIL. Over 399 to 424 the chain is Cytoplasmic; sequence EKKKMLKALNTDGSEAELTSIETSTA.

Belongs to the CRT-like transporter family.

The protein resides in the vacuole membrane. Its function is as follows. Nutrient transporter. Involved in maintaining the osmotic homeostasis of the digestive vacuole. The sequence is that of Putative chloroquine resistance transporter from Plasmodium chabaudi.